Consider the following 305-residue polypeptide: uncharacterized protein (305 aa).

The interval 53 to 185 (SGRIGDGDDG…TGPRSSRTVG (133 aa)) is disordered. Composition is skewed to basic and acidic residues over residues 95–116 (VEER…ERPT) and 128–142 (GSER…RSEG). A compositionally biased stretch (polar residues) spans 161–171 (GNTQAPSQSAE). The segment at 260-302 (CAICMSNFIKNQRLRVLPCDHRFHVGCVDKWLLGHSNKCPVCR) adopts an RING-type; atypical zinc-finger fold.

This is an uncharacterized protein from Encephalitozoon cuniculi (strain GB-M1) (Microsporidian parasite).